A 542-amino-acid chain; its full sequence is MIIMADLDRKLIEILDILSKSKEPVGAKIIAKELNKRGYKIGERAVRYHLKLLDGMKLTKKVGYAGRVITERGLEELEKANISYRLGSIYSNILEKTISANYRFGYVVINRCQVYADFNDVLKIIKSVYESGLAVGDRVGIIDREKFVEINTLCSLNFDNILLQNGIFPLHVCAGVVKYEDGKPVEFKEIIDYKSTSIDPLRAFIEKKETDVMGIIENGEGYLPANFRYFGVEFLERFETILEIDELKCIISYGTENVLGLDVGDDKVGVALIGGLTPIAPFVENNYCVEICPMSSIVRLESLHKLKKNPRDIVTKKANIRIKTALSKMFNAMAKVTYDIDEADGDVIVNTAFIDKKYLDEAFDILKEAYKKGLGISDRFGIVEENDRIKIQTICAVTLDGIFLRNSVPLIPKYGGILEITEDKERFIDIIGYDGSSLDPHEVFFNFVDCEKTFLAGFREVHRVAREKLEEVLKKLNWNGIKAIGEPNNELYGIGVNKDMCGVVTMGGINPLVLLKENEIPIELKAMHEVVRFSDLKSYKEI.

The tract at residues 12 to 77 (IEILDILSKS…VITERGLEEL (66 aa)) is winged helix-turn-helix. NRD stretches follow at residues 85–320 (RLGS…KANI) and 321–542 (RIKT…YKEI).

The protein belongs to the NrpR family. In terms of assembly, homodimer.

Under nitrogen limitation, binding of the intracellular nitrogen metabolite 2-oxoglutarate to NrpR decreases the binding affinity of NrpR to DNA, leading to initiation of transcription. Its function is as follows. Transcriptional repressor of nitrogen fixation and assimilation genes. Binds to two tandem operators in the glnA and nif promoters, thereby blocking transcription of the genes. This is Global nitrogen regulator NrpR from Methanocaldococcus jannaschii (strain ATCC 43067 / DSM 2661 / JAL-1 / JCM 10045 / NBRC 100440) (Methanococcus jannaschii).